The sequence spans 247 residues: DNA repair protein RecO (247 aa).

This sequence belongs to the RecO family.

In terms of biological role, involved in DNA repair and RecF pathway recombination. The sequence is that of DNA repair protein RecO from Brucella abortus (strain 2308).